A 767-amino-acid chain; its full sequence is Golgin subfamily A member 1 (767 aa).

The segment at 13 to 58 (TAVAQRPGGATRIPRSVSKESVASMGADSGDDFASDGSSSREDLSS) is disordered. Phosphoserine occurs at positions 30, 36, 41, 47, 50, and 51. Residues 50–657 (SSSREDLSSQ…RKTLQKELKI (608 aa)) are a coiled coil. One can recognise a GRIP domain in the interval 688–737 (TDAREINFEYLKHVVLKFMSCRESEAFHLIKAVSVLLNFSQEEENMLKET). The segment at 748–767 (KPAPKGSIRPSISNPRIPWS) is disordered.

In terms of assembly, interacts with RAB6A. Directly interacts with TBC1D23. Interacts with FAM91A1; this interaction may be mediated by TBC1D23. Interacts with ARL1; this interaction recruits Golgin-97/GOLGA1 onto the Golgi apparatus. Post-translationally, MARylated by PARP12; MARylation is required for basolateral export of E-Cadherin.

It is found in the golgi apparatus membrane. Its subcellular location is the golgi apparatus. It localises to the trans-Golgi network membrane. The protein localises to the cytoplasmic vesicle. The protein resides in the secretory vesicle. It is found in the acrosome. Involved in vesicular trafficking at the Golgi apparatus level. Involved in endosome-to-Golgi trafficking. Mechanistically, captures transport vesicles arriving from endosomes via the protein TBC1D23. Recognized vesicles are then tethered to the trans-Golgi before subsequent SNARE engagement and vesicle fusion. Selectively regulates E-cadherin transport from the trans-Golgi network in tubulovesicular carriers. Its function is as follows. (Microbial infection) Plays an important role in poxvirus morphogenesis. Translocates into the viral factories where it may transport the membrane fragments and associated protein factors important for virus maturation to the sites of virion assembly. The sequence is that of Golgin subfamily A member 1 (GOLGA1) from Homo sapiens (Human).